A 428-amino-acid polypeptide reads, in one-letter code: Divalent metal cation transporter MntH (428 aa).

Helical transmembrane passes span 33–53 (WYLL…GNVA), 60–80 (AQFG…AALV), 114–134 (QAEI…AIAL), 136–156 (IMFN…SLLL), 171–191 (VITA…FVVT), 210–230 (SVLL…VYLH), 258–278 (VGLA…VAAL), 299–319 (TLGA…GLAS), 334–356 (LLHW…LAIL), 365–385 (TLVL…LPLV), and 406–426 (VGWV…YLTV).

Belongs to the NRAMP family.

The protein resides in the cell membrane. H(+)-stimulated, divalent metal cation uptake system. Transports zinc and iron. Can also interact with manganese and copper. The polypeptide is Divalent metal cation transporter MntH (Mycobacterium tuberculosis (strain CDC 1551 / Oshkosh)).